Here is a 408-residue protein sequence, read N- to C-terminus: Imidazolonepropionase (408 aa).

Residues His-73 and His-75 each contribute to the Fe(3+) site. Zn(2+) is bound by residues His-73 and His-75. 4-imidazolone-5-propanoate is bound by residues Arg-82, Tyr-145, and His-178. N-formimidoyl-L-glutamate is bound at residue Tyr-145. Fe(3+) is bound at residue His-243. His-243 serves as a coordination point for Zn(2+). Gln-246 is a 4-imidazolone-5-propanoate binding site. Residue Asp-318 coordinates Fe(3+). Asp-318 serves as a coordination point for Zn(2+). The N-formimidoyl-L-glutamate site is built by Asn-320 and Gly-322. Ser-323 serves as a coordination point for 4-imidazolone-5-propanoate.

It belongs to the metallo-dependent hydrolases superfamily. HutI family. Zn(2+) is required as a cofactor. The cofactor is Fe(3+).

It localises to the cytoplasm. It carries out the reaction 4-imidazolone-5-propanoate + H2O = N-formimidoyl-L-glutamate. Its pathway is amino-acid degradation; L-histidine degradation into L-glutamate; N-formimidoyl-L-glutamate from L-histidine: step 3/3. In terms of biological role, catalyzes the hydrolytic cleavage of the carbon-nitrogen bond in imidazolone-5-propanoate to yield N-formimidoyl-L-glutamate. It is the third step in the universal histidine degradation pathway. In Shewanella piezotolerans (strain WP3 / JCM 13877), this protein is Imidazolonepropionase.